Reading from the N-terminus, the 638-residue chain is Cell division control protein 45 homolog (638 aa).

The segment at 151-204 (ELSDEENSDSSNEREEEVEDDNRSVESYSSSDYQARSRRRFSEETTQRRAEIKE) is disordered. A compositionally biased stretch (acidic residues) spans 153–170 (SDEENSDSSNEREEEVED). Basic and acidic residues predominate over residues 190–204 (RFSEETTQRRAEIKE).

It belongs to the CDC45 family. As to quaternary structure, interacts with sld3.

Its subcellular location is the nucleus. In terms of biological role, required for initiation of chromosomal DNA replication. May have a role in regulating the MCM proteins nda1 and nda4. The protein is Cell division control protein 45 homolog (sna41) of Schizosaccharomyces pombe (strain 972 / ATCC 24843) (Fission yeast).